The sequence spans 103 residues: Large ribosomal subunit protein uL24 (103 aa).

This sequence belongs to the universal ribosomal protein uL24 family. As to quaternary structure, part of the 50S ribosomal subunit.

One of two assembly initiator proteins, it binds directly to the 5'-end of the 23S rRNA, where it nucleates assembly of the 50S subunit. Its function is as follows. One of the proteins that surrounds the polypeptide exit tunnel on the outside of the subunit. The polypeptide is Large ribosomal subunit protein uL24 (Ruegeria pomeroyi (strain ATCC 700808 / DSM 15171 / DSS-3) (Silicibacter pomeroyi)).